Reading from the N-terminus, the 137-residue chain is Small ribosomal subunit protein uS13 (137 aa).

The interval 114–137 (VTQKNARTRKGPRKTIMAKKDKGK) is disordered. Residues 119–130 (ARTRKGPRKTIM) are compositionally biased toward basic residues.

This sequence belongs to the universal ribosomal protein uS13 family. Part of the 30S ribosomal subunit. Forms a loose heterodimer with protein S19. Forms two bridges to the 50S subunit in the 70S ribosome.

In terms of biological role, located at the top of the head of the 30S subunit, it contacts several helices of the 16S rRNA. In the 70S ribosome it contacts the 23S rRNA (bridge B1a) and protein L5 of the 50S subunit (bridge B1b), connecting the 2 subunits; these bridges are implicated in subunit movement. Contacts the tRNAs in the A and P-sites. The sequence is that of Small ribosomal subunit protein uS13 from Mesomycoplasma hyopneumoniae (strain 232) (Mycoplasma hyopneumoniae).